The following is a 753-amino-acid chain: Bifunctional terpene synthase FUP1 (753 aa).

The tract at residues 1-329 is terpene cyclase; the sequence is MGPLLYRSRH…CSACPRQNAW (329 aa). Residue D96 coordinates Mg(2+). The DDXXD 1 motif lies at 96-100; sequence DDTGE. The short motif at 231-239 is the NSE/DTE element; it reads NDYFSWERE. Residues 330–745 form a prenyltransferase region; sequence KNDTLSNGQN…MLRLCLAKLS (416 aa). 3 residues coordinate isopentenyl diphosphate: K461, R464, and H493. 2 residues coordinate Mg(2+): D500 and D504. The short motif at 500–504 is the DDXXD 2 element; that stretch reads DDLED. R509 is a binding site for dimethylallyl diphosphate. Residue R510 participates in isopentenyl diphosphate binding. Residues K587, T588, Q625, N632, K640, and K650 each contribute to the dimethylallyl diphosphate site.

In the N-terminal section; belongs to the terpene synthase family. It in the C-terminal section; belongs to the FPP/GGPP synthase family. In terms of assembly, hexamer. Mg(2+) serves as cofactor.

It catalyses the reaction isopentenyl diphosphate + (2E,6E)-farnesyl diphosphate = (2E,6E,10E)-geranylgeranyl diphosphate + diphosphate. It functions in the pathway secondary metabolite biosynthesis; terpenoid biosynthesis. In terms of biological role, bifunctional terpene synthase; part of the gene cluster that mediates the biosynthesis of the mycotoxin fusaproliferin (FUP) that belongs to the class of bicyclic sesterterpenoids. The FUP biosynthetic pathway starts with the enzyme encoded by FUP1 that combines a C-terminal prenyltransferase domain responsible for the synthesis of geranylgeranyl diphosphate with the N-terminal terpene cyclase domain, to yield preterpestacin I. Preterpestacin I is then decorated by oxygenation steps that are catalyzed by two cytochrome P450 monooxygenases. First, FUP2 introduces a hydroxyl group at the C-24 position resulting in the formation of preterpestacin IIa, which can be further oxidized. The second P450 monooxygenase catalyzes the hydroxylation at C-16 and C-17 of preterpestacin IIa, producing preterpestacin III. Subsequently, the FAD-dependent oxidoreductase FUP4 catalyzes the oxidation of the hydroxy group at the C-16 position to a keto group, leading to the formation of (-)-terpestacin, which is the immediate precursor of FUP. The final step in the proposed biosynthetic pathway is the addition of an acetyl group at the C-24 position of terpestacin, which is catalyzed by the acetyltransferase FUP5. The chain is Bifunctional terpene synthase FUP1 from Fusarium proliferatum (strain ET1) (Orchid endophyte fungus).